The sequence spans 270 residues: Gap junction beta-3 protein (270 aa).

Over 1 to 20 (MDWKTLQALLSGVNKYSTAF) the chain is Cytoplasmic. The chain crosses the membrane as a helical span at residues 21–40 (GRIWLSVVFVFRVLVYVVAA). Topologically, residues 41–75 (ERVWGDEQKDFDCNTKQPGCTNVCYDNYFPISNIR) are extracellular. Residues 76 to 98 (LWALQLIFVTCPSLLVILHVAYR) traverse the membrane as a helical segment. The Cytoplasmic segment spans residues 99–126 (EERERRHRQKHGDQCAKLYDNAGKKHGG). The helical transmembrane segment at 127-149 (LWWTYLFSLIFKLIIEFLFLYLL) threads the bilayer. The Extracellular segment spans residues 150–187 (HTLWHGFNMPRLVQCANVAPCPNIVDCYIARPTEKKIF). Residues 188 to 210 (TYFMVGASAVCIVLTICELCYLI) form a helical membrane-spanning segment. Over 211-270 (CHRVLRGLHKDKPRGGCSPSSSASRASTCRCHHKLVEAGEVDPDPGNNKLQASAPNLTPI) the chain is Cytoplasmic. The interval 250–270 (EVDPDPGNNKLQASAPNLTPI) is disordered. Residues 258 to 270 (NKLQASAPNLTPI) show a composition bias toward polar residues.

Belongs to the connexin family. Beta-type (group I) subfamily. In terms of assembly, a connexon is composed of a hexamer of connexins. Interacts with CNST.

It is found in the cell membrane. It localises to the cell junction. The protein resides in the gap junction. In terms of biological role, one gap junction consists of a cluster of closely packed pairs of transmembrane channels, the connexons, through which materials of low MW diffuse from one cell to a neighboring cell. This Homo sapiens (Human) protein is Gap junction beta-3 protein (GJB3).